Reading from the N-terminus, the 207-residue chain is MTQPGRLISFEGIDGSGKSTQARRLAEHLRDTGRDPLLTREPGGSPGAEDIRRLLVEGDPDRWSPETELLLFTAARRDHLERLIQPALAEGRDVITDRFADSTRVYQGATRGDLRALVDQLHSLMIGREPDLTFVIDMPPELALTRGLARASGEDRFEEFGLPFQTALRAGFLDLARANPDRCVVIDGNRPEAEVAADVIAHLTVAA.

The tract at residues 11–49 is disordered; that stretch reads EGIDGSGKSTQARRLAEHLRDTGRDPLLTREPGGSPGAE. An ATP-binding site is contributed by 12–19; sequence GIDGSGKS. A compositionally biased stretch (basic and acidic residues) spans 24-38; the sequence is RLAEHLRDTGRDPLL.

It belongs to the thymidylate kinase family.

The catalysed reaction is dTMP + ATP = dTDP + ADP. Functionally, phosphorylation of dTMP to form dTDP in both de novo and salvage pathways of dTTP synthesis. In Dinoroseobacter shibae (strain DSM 16493 / NCIMB 14021 / DFL 12), this protein is Thymidylate kinase.